Consider the following 34-residue polypeptide: Trypsin inhibitor (34 aa).

Intrachain disulfides connect C7/C29 and C11/C25.

The protein resides in the secreted. Its function is as follows. Inhibits trypsin. The protein is Trypsin inhibitor of Veronica hederifolia (Ivy-leaved speedwell).